The primary structure comprises 49 residues: U-theraphotoxin-Lk2a (49 aa).

Cystine bridges form between cysteine 4–cysteine 17, cysteine 8–cysteine 41, cysteine 22–cysteine 24, and cysteine 35–cysteine 46.

This sequence belongs to the neurotoxin 12 (Hwtx-2) family. 04 (lasiotoxin) subfamily. As to expression, expressed by the venom gland.

The protein resides in the secreted. Functionally, toxin that causes irreversible contractile paralysis into adult Aedes aegypti resulting in 100% mortality after 24 hours. The protein is U-theraphotoxin-Lk2a of Lasiodora klugi (Bahia scarlet tarantula).